The chain runs to 201 residues: 2-phospho-L-lactate guanylyltransferase (201 aa).

The protein belongs to the CofC family. In terms of assembly, homodimer.

The catalysed reaction is (2S)-2-phospholactate + GTP + H(+) = (2S)-lactyl-2-diphospho-5'-guanosine + diphosphate. The protein operates within cofactor biosynthesis; coenzyme F420 biosynthesis. Its function is as follows. Guanylyltransferase that catalyzes the activation of (2S)-2-phospholactate (2-PL) as (2S)-lactyl-2-diphospho-5'-guanosine, via the condensation of 2-PL with GTP. It is involved in the biosynthesis of coenzyme F420, a hydride carrier cofactor. The protein is 2-phospho-L-lactate guanylyltransferase of Natronomonas pharaonis (strain ATCC 35678 / DSM 2160 / CIP 103997 / JCM 8858 / NBRC 14720 / NCIMB 2260 / Gabara) (Halobacterium pharaonis).